We begin with the raw amino-acid sequence, 99 residues long: MMMNAFFPAMALMVLVGCSIPSPVQKAQRVKVDPLRSLNMEALCKDQAAKRYNTGEQKIDVTAFEQFQGSYEMRGYTFRKEQFVCSFDADGHFLHLSMR.

An N-terminal signal peptide occupies residues 1-17; it reads MMMNAFFPAMALMVLVG. Cys-18 is lipidated: N-palmitoyl cysteine. The S-diacylglycerol cysteine moiety is linked to residue Cys-18.

It is found in the cell membrane. This is an uncharacterized protein from Escherichia coli (strain K12).